Reading from the N-terminus, the 796-residue chain is Quinoprotein glucose dehydrogenase (796 aa).

The Cytoplasmic segment spans residues 1–10; that stretch reads MAINNTGSRR. The chain crosses the membrane as a helical span at residues 11 to 37; the sequence is LLVTLTALFAALCGLYLLIGGGWLVAI. The Periplasmic portion of the chain corresponds to 38 to 40; that stretch reads GGS. A helical transmembrane segment spans residues 41 to 58; it reads WYYPIAGLVMLGVAWMLW. At 59 to 62 the chain is on the cytoplasmic side; it reads RSKR. A helical transmembrane segment spans residues 63–81; it reads AALWLYAALLLGTMIWGVW. Residues 82 to 95 are Periplasmic-facing; the sequence is EVGFDFWALTPRSD. The chain crosses the membrane as a helical span at residues 96 to 110; that stretch reads ILVFFGIWLILPFVW. The Cytoplasmic segment spans residues 111–118; it reads RRLVIPAS. The chain crosses the membrane as a helical span at residues 119–141; sequence GAVAALVVALLISGGILTWAGFN. The Periplasmic segment spans residues 142–796; sequence DPQEINGTLS…VAYALPDDVK (655 aa). The active-site Proton acceptor is D466.

It belongs to the bacterial PQQ dehydrogenase family. As to quaternary structure, monomer. Requires pyrroloquinoline quinone as cofactor.

It is found in the cell inner membrane. It catalyses the reaction a ubiquinone + D-glucose = D-glucono-1,5-lactone + a ubiquinol. Its function is as follows. GDH is probably involved in energy conservation rather than in sugar metabolism. The sequence is that of Quinoprotein glucose dehydrogenase (gcd) from Escherichia coli (strain K12).